Consider the following 141-residue polypeptide: MEVPMDCPGCENKVRKALEKMNGVHDVQIDIKQQRVTVTGSAEQKKVLKVARNVTKRDICLWSYPYHPESNGYNDRYFKKKFRKRINMSVNGEKVSSYNYHKHGYHGHEHGYYQERPYSGLINPSASSMFSEENPHFCSIM.

In terms of domain architecture, HMA spans 1–59; that stretch reads MEVPMDCPGCENKVRKALEKMNGVHDVQIDIKQQRVTVTGSAEQKKVLKVARNVTKRDI. 2 residues coordinate a metal cation: C7 and C10. C138 is modified (cysteine methyl ester). The S-farnesyl cysteine moiety is linked to residue C138. Positions 139 to 141 are cleaved as a propeptide — removed in mature form; sequence SIM.

It belongs to the HIPP family.

In terms of biological role, heavy-metal-binding protein. This Arabidopsis thaliana (Mouse-ear cress) protein is Heavy metal-associated isoprenylated plant protein 29.